Consider the following 75-residue polypeptide: Small ribosomal subunit protein bS18 (75 aa).

This sequence belongs to the bacterial ribosomal protein bS18 family. As to quaternary structure, part of the 30S ribosomal subunit. Forms a tight heterodimer with protein bS6.

Functionally, binds as a heterodimer with protein bS6 to the central domain of the 16S rRNA, where it helps stabilize the platform of the 30S subunit. The chain is Small ribosomal subunit protein bS18 from Wigglesworthia glossinidia brevipalpis.